The following is a 42-amino-acid chain: uncharacterized protein (42 aa).

Residues 15-37 (PLILAVDCAIIIPNTNFIHSFLI) traverse the membrane as a helical segment.

The protein resides in the membrane. This is an uncharacterized protein from Dictyostelium discoideum (Social amoeba).